Consider the following 230-residue polypeptide: Ribonuclease 3 (230 aa).

The region spanning 7–134 is the RNase III domain; the sequence is LEELESKLGI…VIAAIYLDKG (128 aa). Position 47 (glutamate 47) interacts with Mg(2+). The active site involves aspartate 51. Mg(2+) is bound by residues aspartate 120 and glutamate 123. The active site involves glutamate 123. The DRBM domain occupies 161–230; the sequence is DYKTRLQEIL…ACKALKGLDN (70 aa).

This sequence belongs to the ribonuclease III family. In terms of assembly, homodimer. Mg(2+) is required as a cofactor.

It is found in the cytoplasm. The enzyme catalyses Endonucleolytic cleavage to 5'-phosphomonoester.. Its function is as follows. Digests double-stranded RNA. Involved in the processing of primary rRNA transcript to yield the immediate precursors to the large and small rRNAs (23S and 16S). Processes some mRNAs, and tRNAs when they are encoded in the rRNA operon. Processes pre-crRNA and tracrRNA of type II CRISPR loci if present in the organism. The protein is Ribonuclease 3 of Clostridium acetobutylicum (strain ATCC 824 / DSM 792 / JCM 1419 / IAM 19013 / LMG 5710 / NBRC 13948 / NRRL B-527 / VKM B-1787 / 2291 / W).